We begin with the raw amino-acid sequence, 676 residues long: Heat shock cognate HSP70 protein (676 aa).

Positions 613–676 (SARREGKDGW…RIEAINANTE (64 aa)) are disordered. The segment covering 630–646 (GSGDDNDGDDNSDEEDE) has biased composition (acidic residues).

This sequence belongs to the heat shock protein 70 family.

The polypeptide is Heat shock cognate HSP70 protein (Trypanosoma brucei brucei).